Consider the following 422-residue polypeptide: Transcription termination factor Rho 1 (422 aa).

One can recognise a Rho RNA-BD domain in the interval 49–124 (AAIGGGVVEI…VKAHSINFTD (76 aa)). ATP contacts are provided by residues 173–178 (GKGQRA), 185–190 (RAGKTI), and R216.

The protein belongs to the Rho family. As to quaternary structure, homohexamer. The homohexamer assembles into an open ring structure.

In terms of biological role, facilitates transcription termination by a mechanism that involves Rho binding to the nascent RNA, activation of Rho's RNA-dependent ATPase activity, and release of the mRNA from the DNA template. The protein is Transcription termination factor Rho 1 of Ehrlichia chaffeensis (strain ATCC CRL-10679 / Arkansas).